The following is a 155-amino-acid chain: Histone H3-like 3 (155 aa).

Residues 34–59 form a disordered region; sequence IGVKLPNSYRPGDQTVCKPAPPTDGV.

Belongs to the histone H3 family. In terms of assembly, the nucleosome is a histone octamer containing two molecules each of H2A, H2B, H3 and H4 assembled in one H3-H4 heterotetramer and two H2A-H2B heterodimers. The octamer wraps approximately 147 bp of DNA. As to expression, pollen specific.

The protein resides in the nucleus. Its subcellular location is the chromosome. In terms of biological role, core component of nucleosome. Nucleosomes wrap and compact DNA into chromatin, limiting DNA accessibility to the cellular machineries which require DNA as a template. Histones thereby play a central role in transcription regulation, DNA repair, DNA replication and chromosomal stability. DNA accessibility is regulated via a complex set of post-translational modifications of histones, also called histone code, and nucleosome remodeling. The chain is Histone H3-like 3 (leH3) from Lilium longiflorum (Trumpet lily).